Reading from the N-terminus, the 768-residue chain is DNA ligase 1 (768 aa).

The disordered stretch occupies residues valine 42–arginine 139. The segment covering lysine 52–lysine 99 has biased composition (basic and acidic residues). The segment covering glycine 104 to proline 124 has biased composition (low complexity). The interaction with target DNA stretch occupies residues lysine 309–threonine 318. An ATP-binding site is contributed by glutamate 414. The N6-AMP-lysine intermediate role is filled by lysine 416. ATP-binding residues include arginine 421 and arginine 437. A Mg(2+)-binding site is contributed by glutamate 469. Residues lysine 490 to lysine 492 form an interaction with target DNA region. Glutamate 568 is a binding site for Mg(2+). 3 residues coordinate ATP: lysine 573, arginine 587, and lysine 593.

The protein belongs to the ATP-dependent DNA ligase family. It depends on Mg(2+) as a cofactor.

The protein resides in the nucleus. The enzyme catalyses ATP + (deoxyribonucleotide)n-3'-hydroxyl + 5'-phospho-(deoxyribonucleotide)m = (deoxyribonucleotide)n+m + AMP + diphosphate.. In terms of biological role, DNA ligase that seals nicks in double-stranded DNA during DNA replication, DNA recombination and DNA repair. This Schizosaccharomyces pombe (strain 972 / ATCC 24843) (Fission yeast) protein is DNA ligase 1 (cdc17).